The following is a 789-amino-acid chain: Cadherin-6 (789 aa).

Residues 1 to 18 (MRTYRYFLLLFWVGQPYP) form the signal peptide. Positions 19-53 (TFSNPLSKRTSGFPAKRRALELSANSRNELSRSKR) are excised as a propeptide. Cadherin domains are found at residues 54–159 (SWMW…EPIF), 160–268 (TKDV…PPRF), 269–383 (PQST…PPVF), 384–486 (SKPA…DNAP), and 487–608 (EFAE…LIHP). At 54-615 (SWMWNQFFLL…IHPTGLSTGA (562 aa)) the chain is on the extracellular side. Asn-255 is a glycosylation site (N-linked (GlcNAc...) asparagine). The interval 259-288 (TDVNDNPPRFPQSTYQFKTPESSPPGTPIG) is disordered. The segment covering 269–279 (PQSTYQFKTPE) has biased composition (polar residues). Asn-399, Asn-437, Asn-455, and Asn-536 each carry an N-linked (GlcNAc...) asparagine glycan. Residues 616-636 (LVAILLCIVILLVTVVLFAAL) form a helical membrane-spanning segment. At 637-789 (RRQRKKEPLI…YGGMDSDKDS (153 aa)) the chain is on the cytoplasmic side. 2 positions are modified to phosphoserine: Ser-785 and Ser-789.

Highly expressed in kidney and brain.

It is found in the cell membrane. In terms of biological role, cadherins are calcium-dependent cell adhesion proteins. They preferentially interact with themselves in a homophilic manner in connecting cells; cadherins may thus contribute to the sorting of heterogeneous cell types. The polypeptide is Cadherin-6 (Cdh6) (Rattus norvegicus (Rat)).